The chain runs to 999 residues: Protein Smaug (999 aa).

Residues 1-37 are compositionally biased toward polar residues; that stretch reads MKYATGTDNAMTSGISGQTNNSNSVSNEMQPTTSTPT. 3 disordered regions span residues 1 to 45, 50 to 69, and 321 to 370; these read MKYA…EATS, TATY…QSQP, and CSSV…GSSS. A compositionally biased stretch (low complexity) spans 321-338; that stretch reads CSSVASSSMCPASGSRSS. 2 positions are modified to phosphoserine: Ser-564 and Ser-575. Residues 583 to 763 are interaction with cup; that stretch reads EFKPNYIKFH…KDLKFKLSKM (181 aa). The region spanning 600–654 is the SAM domain; it reads GIGLWLKSLRLHKYIELFKNMTYEEMLLITEDFLQSVGVTKGASHKLALCIDKLK. Residues 773–892 are disordered; the sequence is HVKPAGVGPN…HHHAQQMQQM (120 aa). Polar residues-rich tracts occupy residues 801–822 and 854–864; these read KNGS…NFSL and HQPQYKSSSYP. Ser-972 carries the post-translational modification Phosphoserine.

This sequence belongs to the SMAUG family. As to quaternary structure, interacts with oskar (osk). Binds to the 3'-UTR of nos. Interacts with cup, which in turn recruits eIF4-E, leading to an indirect interaction between smg and eIF4-E that prevents mRNA translation.

Its subcellular location is the cytoplasm. Translation regulator that binds to the 3'-UTR of specific mRNAs such as nanos (nos) and prevent their translation. Prevents translation of unlocalized nos in the bulk cytoplasm via the recruitment of cup. In Drosophila yakuba (Fruit fly), this protein is Protein Smaug (smg).